A 342-amino-acid chain; its full sequence is S-adenosylmethionine:tRNA ribosyltransferase-isomerase (342 aa).

It belongs to the QueA family. Monomer.

The protein resides in the cytoplasm. It carries out the reaction 7-aminomethyl-7-carbaguanosine(34) in tRNA + S-adenosyl-L-methionine = epoxyqueuosine(34) in tRNA + adenine + L-methionine + 2 H(+). It functions in the pathway tRNA modification; tRNA-queuosine biosynthesis. Transfers and isomerizes the ribose moiety from AdoMet to the 7-aminomethyl group of 7-deazaguanine (preQ1-tRNA) to give epoxyqueuosine (oQ-tRNA). The protein is S-adenosylmethionine:tRNA ribosyltransferase-isomerase of Zymomonas mobilis subsp. mobilis (strain ATCC 31821 / ZM4 / CP4).